Reading from the N-terminus, the 443-residue chain is Xaa-Pro dipeptidase (443 aa).

Mn(2+) contacts are provided by D246, D257, H339, E384, and E423.

The protein belongs to the peptidase M24B family. Bacterial-type prolidase subfamily. Requires Mn(2+) as cofactor.

The enzyme catalyses Xaa-L-Pro dipeptide + H2O = an L-alpha-amino acid + L-proline. In terms of biological role, splits dipeptides with a prolyl residue in the C-terminal position. This is Xaa-Pro dipeptidase from Escherichia fergusonii (strain ATCC 35469 / DSM 13698 / CCUG 18766 / IAM 14443 / JCM 21226 / LMG 7866 / NBRC 102419 / NCTC 12128 / CDC 0568-73).